Reading from the N-terminus, the 357-residue chain is Vomeronasal type-1 receptor 5 (357 aa).

Over 1 to 3 (MLK) the chain is Extracellular. The helical transmembrane segment at 4 to 24 (LVIIENMAEIMLFSLDLLLFS) threads the bilayer. Over 25 to 52 (TDILCFNFPSKMIKLPGFITIQIFFYPQ) the chain is Cytoplasmic. The helical transmembrane segment at 53–73 (ASFGISANTILLLFHIFTFVF) threads the bilayer. Residues 74 to 81 (SHRSKSID) are Extracellular-facing. A helical transmembrane segment spans residues 82 to 102 (MIISHLSLIHILLLFTQAILV). The Cytoplasmic portion of the chain corresponds to 103–130 (SLDFFGSQNTQDDLRYKVIVFLNKVMRG). Residues 131-151 (LSICTPCLLSVLQAIISPSIF) form a helical membrane-spanning segment. Residues 152–163 (SLAKLKHPSASH) lie on the Extracellular side of the membrane. A helical membrane pass occupies residues 164 to 184 (ILGFFLFSWVLNMFIGVIFCC). The Cytoplasmic segment spans residues 185 to 269 (TLRLPPVKRG…RVSPVKRASQ (85 aa)). Residues 270–290 (AILLLVSFVFTYWVDFTFSFS) form a helical membrane-spanning segment. The Extracellular segment spans residues 291 to 300 (GGVTWINDSL). An N-linked (GlcNAc...) asparagine glycan is attached at N297. The chain crosses the membrane as a helical span at residues 301–321 (LVWLQVIVANSYAAISPLMLI). Topologically, residues 322-357 (YADNQIFKTLQMLWFKYLSPPKLMLKFNRQCGSTKK) are cytoplasmic.

This sequence belongs to the G-protein coupled receptor 1 family.

It is found in the cell membrane. Its function is as follows. Putative pheromone receptor. This chain is Vomeronasal type-1 receptor 5 (VN1R5), found in Homo sapiens (Human).